We begin with the raw amino-acid sequence, 132 residues long: Interleukin-4 (132 aa).

The N-terminal stretch at 1 to 24 is a signal peptide; it reads MGLTSQLIPTLVCLLALTSTFVHG. N-linked (GlcNAc...) asparagine glycosylation is found at asparagine 28, asparagine 45, asparagine 62, and asparagine 101. Cystine bridges form between cysteine 48–cysteine 84 and cysteine 70–cysteine 104.

This sequence belongs to the IL-4/IL-13 family.

Its subcellular location is the secreted. In terms of biological role, participates in at least several B-cell activation processes as well as of other cell types. It is a costimulator of DNA-synthesis. It induces the expression of class II MHC molecules on resting B-cells. It enhances both secretion and cell surface expression of IgE and IgG1. It also regulates the expression of the low affinity Fc receptor for IgE (CD23) on both lymphocytes and monocytes. Positively regulates IL31RA expression in macrophages. Stimulates autophagy in dendritic cells by interfering with mTORC1 signaling and through the induction of RUFY4. This Ailuropoda melanoleuca (Giant panda) protein is Interleukin-4 (IL4).